The chain runs to 130 residues: Albumin-1 A (130 aa).

The first 26 residues, 1-26 (MASVKLASLIVLFATLGMFLTKNVGA), serve as a signal peptide directing secretion. 3 cysteine pairs are disulfide-bonded: C29-C46, C33-C48, and C41-C58. 2 consecutive propeptides follow at residues 64–69 (VFLRTN) and 123–130 (LLKSVSTA).

The C-terminal glycine may be removed from PA1b. Major component of both the cotyledons and embryonic axes of mature seeds.

In terms of biological role, PA1b binds to basic 7S globulin (BG) and stimulates its phosphorylation activity. Involved in the signal transduction system to regulate the growth and differentiation as a hormone peptide. Toxic to various insects through binding to a high affinity binding site in the insect gut. The chain is Albumin-1 A from Pisum sativum (Garden pea).